The chain runs to 159 residues: Nucleotide-binding protein PST_3153 (159 aa).

This sequence belongs to the YajQ family.

Nucleotide-binding protein. This is Nucleotide-binding protein PST_3153 from Stutzerimonas stutzeri (strain A1501) (Pseudomonas stutzeri).